Here is a 564-residue protein sequence, read N- to C-terminus: uncharacterized protein (564 aa).

The N-terminal stretch at 1 to 21 (MRRIGAITALSLPVLLSLLYS) is a signal peptide. C22 carries N-palmitoyl cysteine lipidation. The S-diacylglycerol cysteine moiety is linked to residue C22.

It localises to the cell membrane. This is an uncharacterized protein from Aquifex aeolicus (strain VF5).